A 263-amino-acid chain; its full sequence is Endonuclease 8 (263 aa).

Pro2 functions as the Schiff-base intermediate with DNA in the catalytic mechanism. The Proton donor role is filled by Glu3. Residue Lys53 is the Proton donor; for beta-elimination activity of the active site. Residues Gln70, Arg125, and Asn169 each coordinate DNA. The FPG-type zinc-finger motif lies at 229-263; that stretch reads KVFHRDGELCERCGGIIEKTTLSSRPFYWCPGCQH. The active-site Proton donor; for delta-elimination activity is Arg253.

It belongs to the FPG family. The cofactor is Zn(2+).

The catalysed reaction is 2'-deoxyribonucleotide-(2'-deoxyribose 5'-phosphate)-2'-deoxyribonucleotide-DNA = a 3'-end 2'-deoxyribonucleotide-(2,3-dehydro-2,3-deoxyribose 5'-phosphate)-DNA + a 5'-end 5'-phospho-2'-deoxyribonucleoside-DNA + H(+). Functionally, involved in base excision repair of DNA damaged by oxidation or by mutagenic agents. Acts as a DNA glycosylase that recognizes and removes damaged bases. Has a preference for oxidized pyrimidines, such as thymine glycol, 5,6-dihydrouracil and 5,6-dihydrothymine. Has AP (apurinic/apyrimidinic) lyase activity and introduces nicks in the DNA strand. Cleaves the DNA backbone by beta-delta elimination to generate a single-strand break at the site of the removed base with both 3'- and 5'-phosphates. The polypeptide is Endonuclease 8 (Escherichia coli (strain 55989 / EAEC)).